The sequence spans 112 residues: Protein FAM32A (112 aa).

The segment at 23–56 (TKRKKKKKDKDKAKMLEAMGTSKKNEEEKRRCLD) is disordered. Over residues 45–56 (KKNEEEKRRCLD) the composition is skewed to basic and acidic residues.

Belongs to the FAM32 family.

The protein localises to the nucleus. May induce G2 arrest and apoptosis. May also increase cell sensitivity to apoptotic stimuli. This Rattus norvegicus (Rat) protein is Protein FAM32A (Fam32a).